The sequence spans 1441 residues: Protein clueless (1441 aa).

2 disordered regions span residues 1–79 and 106–131; these read MALD…EAAT and VAAN…ELES. The span at 8-22 shows a compositional bias: polar residues; that stretch reads KNSSSAATGDANTVK. Over residues 54-63 the composition is skewed to basic residues; that stretch reads AKKKGKKNRN. Low complexity-rich tracts occupy residues 64–79 and 106–126; these read KSPP…EAAT and VAAN…AASS. At Ser-273 the chain carries Phosphoserine. In terms of domain architecture, Clu spans 427–669; it reads RAEDAFSSKL…RTFPPDVNFL (243 aa). Residues 726 to 753 show a composition bias toward basic and acidic residues; sequence KKQDEAKEGTKEPASETEKESPPKAITE. Disordered stretches follow at residues 726 to 769 and 961 to 1009; these read KKQD…GETK and EIHK…SGGT. The segment covering 964–977 has biased composition (basic residues); sequence KKRTNTKYNKHKSS. Residues 978 to 1009 are compositionally biased toward low complexity; sequence KSSGSGSKQSGQTSNQNGTSTSPSSSTASGGT. TPR repeat units lie at residues 1109 to 1142, 1235 to 1268, and 1270 to 1303; these read AYNF…LNNV, ALID…NLKY, and GAKA…EKET.

The protein belongs to the CLU family.

It localises to the cytoplasm. Functionally, mRNA-binding protein involved in proper cytoplasmic distribution of mitochondria. The chain is Protein clueless from Drosophila willistoni (Fruit fly).